A 607-amino-acid chain; its full sequence is Autophagy-related protein 16-1 (607 aa).

The interval 13–43 (WKRHISEQLRRRDRLQRQAFEEIILQYNKLL) is interaction with ATG5. Residues 79–230 (DSQLQEMAQL…QKELAEAAKE (152 aa)) are a coiled coil. Position 139 is a phosphoserine (S139). Residues 207–230 (AENEKDSRRRQARLQKELAEAAKE) form a WIPI2-binding region. Residues 230 to 242 (EPLPVEQDDDIEV) are RB1CC1-binding. A phosphoserine mark is found at S269 and S287. Positions 296–299 (DNVD) match the Caspase cleavage motif. WD repeat units lie at residues 320-359 (AHDGEVNAVQFSPGSRLLATGGMDRRVKLWEVFGEKCEFK), 364-403 (GSNAGITSIEFDSAGSYLLAASNDFASRIWTVDDSRLRHT), 406-445 (GHSGKVLSAKFLLDNARIVSGSHDRTLKHWDLRSKVCIKT), 447-484 (FAGSSCNDIVCTEQCVMSGHFDKKIRFWDIRSESIVRE), 486-525 (ELLGKITALDLNPERTELLSCSRDDLLKVIDLRTNAIKQT), 532-573 (KCGS…KVLS), and 575-607 (QHSSSINAVAWSPSGLHVVSVDKGCKAVLWAQY).

The protein belongs to the WD repeat ATG16 family. Homodimer. Homooligomer. Heterooligomer with ATG16L2. Interacts with WIPI1. Interacts with WIPI2. Interacts with RB1CC1; the interaction is required for ULK1 complex-dependent autophagy. Interacts with ATG5. Part of the minor complex composed of 4 sets of ATG12-ATG5 and ATG16L1 (400 kDa); this complex interacts with ATG3 leading to disruption of ATG7 interaction and promotion of ATG8-like proteins lipidation. Part of the major complex composed of 8 sets of ATG12-ATG5 and ATG16L1 (800 kDa). Interacts with RAB33B (GTP- and GDP-bound forms); the complex consists of a tetramer where two RAB33B molecules bind independently one molecule of the ATG16L1 homodimer; the interaction promotes ATG12-ATG5-ATG16L1 complex recruitment to phagophores. Interacts (via WD repeats) with TMEM59; the interaction mediates unconventional autophagic activity of TMEM59. Interacts with TLR2. Interacts (via WD repeats) with MEFV. Interacts with PPP1CA; the interaction dephosphorylates ATG16L1 causing dissociation of ATG12-ATG5-ATG16L1 complex. Interacts (via N-terminal) with CLTC. Interacts with NOD1. Interacts with NOD2. Interacts with TUFM. Interacts with TRIM16. Interacts (via WD repeats) with SPATA33. Interacts with IRGM. In terms of processing, proteolytic cleavage by activated CASP3 leads to degradation and may regulate autophagy upon cellular stress and apoptotic stimuli. Phosphorylation at Ser-139 promotes association with the ATG12-ATG5 conjugate to form the ATG12-ATG5-ATG16L1 complex.

It localises to the cytoplasm. The protein localises to the preautophagosomal structure membrane. It is found in the endosome membrane. Its subcellular location is the lysosome membrane. In terms of biological role, plays an essential role in both canonical and non-canonical autophagy: interacts with ATG12-ATG5 to mediate the lipidation to ATG8 family proteins (MAP1LC3A, MAP1LC3B, MAP1LC3C, GABARAPL1, GABARAPL2 and GABARAP). Acts as a molecular hub, coordinating autophagy pathways via distinct domains that support either canonical or non-canonical signaling. During canonical autophagy, interacts with ATG12-ATG5 to mediate the conjugation of phosphatidylethanolamine (PE) to ATG8 proteins, to produce a membrane-bound activated form of ATG8. Thereby, controls the elongation of the nascent autophagosomal membrane. As part of the ATG8 conjugation system with ATG5 and ATG12, required for recruitment of LRRK2 to stressed lysosomes and induction of LRRK2 kinase activity in response to lysosomal stress. Also involved in non-canonical autophagy, a parallel pathway involving conjugation of ATG8 proteins to single membranes at endolysosomal compartments, probably by catalyzing conjugation of phosphatidylserine (PS) to ATG8. Non-canonical autophagy plays a key role in epithelial cells to limit lethal infection by influenza A (IAV) virus. Regulates mitochondrial antiviral signaling (MAVS)-dependent type I interferon (IFN-I) production. Negatively regulates NOD1- and NOD2-driven inflammatory cytokine response. Instead, promotes an autophagy-dependent antibacterial pathway together with NOD1 or NOD2. Plays a role in regulating morphology and function of Paneth cell. This is Autophagy-related protein 16-1 from Pongo abelii (Sumatran orangutan).